Reading from the N-terminus, the 51-residue chain is Large ribosomal subunit protein eL39 (51 aa).

It belongs to the eukaryotic ribosomal protein eL39 family.

This Aeropyrum pernix (strain ATCC 700893 / DSM 11879 / JCM 9820 / NBRC 100138 / K1) protein is Large ribosomal subunit protein eL39 (rpl39e).